The following is a 750-amino-acid chain: Polyribonucleotide nucleotidyltransferase (750 aa).

2 residues coordinate Mg(2+): Asp-523 and Asp-529. One can recognise a KH domain in the interval 589–648; it reads PRVTSISIPVDKIGEVIGPKGKMINSITEETGAEITIEDDGTIYVGAADGPSAEAAIDKI. The region spanning 660–729 is the S1 motif domain; it reads GERFLGTVVK…SRGKISLVVV (70 aa).

Belongs to the polyribonucleotide nucleotidyltransferase family. The cofactor is Mg(2+).

It is found in the cytoplasm. The enzyme catalyses RNA(n+1) + phosphate = RNA(n) + a ribonucleoside 5'-diphosphate. Involved in mRNA degradation. Catalyzes the phosphorolysis of single-stranded polyribonucleotides processively in the 3'- to 5'-direction. The chain is Polyribonucleotide nucleotidyltransferase from Saccharopolyspora erythraea (strain ATCC 11635 / DSM 40517 / JCM 4748 / NBRC 13426 / NCIMB 8594 / NRRL 2338).